The primary structure comprises 445 residues: MIRLVTMGKSSEAGVSSFQALTMSLSGRIGVGNVAGTATGIAYGGPGAVFWMWVITFIGAATAYVESTWRKFIKRNKTDNTVAVRRSTLKKALAGNGLRCSRAAIILSMAVLMPGIQANSIADSFSNAFGIPKLVTGIFVIAVLGFTIFGGVKRIAKTAEIVVPFMAVGYLFVAIAIIAANIEKVPDVFGLIFKSAFGADQVFGGILGSAVMWGVKRGLYANEAGQGTGAHPAAAAEVSHPAKQGLVQAFSIYLDVFLVVTATALMILFTGQYNVINEKTGETIVEHLKGVEPGAGYTQAAVDTLFPGFGSAFIAIALFFFAFTTMYAYYYIAETNLAYLVRSEKRGTAFFALKLVFLAATFYGTVKTATTAWAMGDIGLGIMVWLNLIAILLLFKPAYMALKDYEEQLKQGKDPEFNASKYGIKNAKFWENGYKRWEEKKGKAL.

9 consecutive transmembrane segments (helical) span residues 41–61, 103–123, 129–149, 159–179, 188–208, 249–269, 304–324, 349–369, and 375–395; these read IAYG…IGAA, AAII…SIAD, FGIP…FTIF, AEIV…AIIA, VFGL…GILG, AFSI…MILF, TLFP…FAFT, AFFA…VKTA, and MGDI…LLLF.

It belongs to the alanine or glycine:cation symporter (AGCS) (TC 2.A.25) family. In terms of processing, the N-terminus is blocked.

Its subcellular location is the cell membrane. Functionally, mediates the active transport of alanine, driven by either an H(+) or Na(+) gradient. This Bacillus sp. (strain PS3) protein is Sodium/proton-dependent alanine carrier protein.